Here is a 290-residue protein sequence, read N- to C-terminus: 1D-myo-inositol 2-acetamido-2-deoxy-alpha-D-glucopyranoside deacetylase (290 aa).

Zn(2+) is bound by residues His17, Asp20, and His150.

Belongs to the MshB deacetylase family. Requires Zn(2+) as cofactor.

The enzyme catalyses 1D-myo-inositol 2-acetamido-2-deoxy-alpha-D-glucopyranoside + H2O = 1D-myo-inositol 2-amino-2-deoxy-alpha-D-glucopyranoside + acetate. Its function is as follows. Catalyzes the deacetylation of 1D-myo-inositol 2-acetamido-2-deoxy-alpha-D-glucopyranoside (GlcNAc-Ins) in the mycothiol biosynthesis pathway. The sequence is that of 1D-myo-inositol 2-acetamido-2-deoxy-alpha-D-glucopyranoside deacetylase from Corynebacterium glutamicum (strain R).